Reading from the N-terminus, the 313-residue chain is 2-phosphoglycerate kinase (313 aa).

The region spanning 8–95 (NKILVKDKDY…LWRRVLKKHS (88 aa)) is the ATP-cone domain.

The protein belongs to the 2-phosphoglycerate kinase family. Requires a divalent metal cation as cofactor.

It catalyses the reaction (2R)-2-phosphoglycerate + ATP = (2R)-2,3-bisphosphoglycerate + ADP + H(+). It participates in thermoadapter biosynthesis; cyclic 2,3-diphosphoglycerate biosynthesis; cyclic 2,3-diphosphoglycerate from 2-phospho-D-glycerate: step 1/2. Its function is as follows. Catalyzes the phosphorylation of 2-phosphoglycerate to 2,3-diphosphoglycerate. Involved in the biosynthesis of cyclic 2,3-bisphosphoglycerate, a thermoprotectant. The protein is 2-phosphoglycerate kinase of Methanococcus vannielii (strain ATCC 35089 / DSM 1224 / JCM 13029 / OCM 148 / SB).